The chain runs to 645 residues: MELKTMPHNGANGSPQHNNNNNSNNNNNVSSDTKTDNNEKEAQKKDEGRTNWSNGIEFLMSCISVSVGLGNVWRFPFTAYENGGGAFLIPYIIVLFLIGKPMYYLEMIIGQFTSQGTVKIWSICPSFVGVGYGQAFATICIITYYSSLLALTLYYLFVSFQSELPWSYCRDEWTNCVNSIPTEFVETALGNTTSALAQQANTLSNTTKLQSSSELYFLNVVIKEKSDISDGIGIPDWKLTIALFVSWVVIFLVIMRGVKSSGKAAYFLALFPYVVLFALLGRAVTLEGAVDGIIFFLQPQWGELLNPIVWKEAVVQCFFSLAVGCGPIIMFASYNRFDHGIYRDAMIVTTLDTLTSLLGGITIFAILGNLAHNLKAENIRDVVRSGTGLAFISYPDAISKFQAVPQLFSVLFFFMLFVLGIGSIVALQSTIVTIICDQFKSWKYWKVALATSACGFLMGLVYVTPGGQWILTLVDFYGGTYVVFILAIFELSGIVWIYGLQNFCDDIEFMSNKNVSMYWRLCWSFFTPVMMIVIFIYSMATIQPIKYSDQYFPLAGDVAGWLLFAVGAAQFPLWGWWYIATHRHGSCAESIKASLKPSSKWGPASPENRQAWLLFKSDLAAKRANEAKSNKFGFFQQKLRNMCGK.

The tract at residues Met1–Gly48 is disordered. At Met1 to Asn51 the chain is on the cytoplasmic side. Over residues Asn18–Asp32 the composition is skewed to low complexity. Residues Thr33–Gly48 show a composition bias toward basic and acidic residues. The next 3 helical transmembrane spans lie at Trp52–Val72, Gly85–Leu105, and Thr138–Val158. Residues Asn191 and Asn205 are each glycosylated (N-linked (GlcNAc...) asparagine). The next 7 membrane-spanning stretches (helical) occupy residues Ile234–Ile254, Ala264–Val284, Ala313–Ser333, Ile347–Leu367, Leu407–Leu427, Cys454–Val474, and Thr480–Leu500. Asn514 is a glycosylation site (N-linked (GlcNAc...) asparagine). The next 2 membrane-spanning stretches (helical) occupy residues Cys522 to Ile542 and Ala559 to Ile579.

Belongs to the sodium:neurotransmitter symporter (SNF) (TC 2.A.22) family.

Its subcellular location is the membrane. Functionally, unusual broad substrate spectrum amino acid:sodium cotransporter that promotes absorption of the D isomers of essential amino acids. Neutral amino acids are the preferred substrates, especially methionine and phenylalanine. The chain is Sodium-dependent nutrient amino acid transporter 1 from Drosophila mojavensis (Fruit fly).